The primary structure comprises 181 residues: K99 fimbrial protein (181 aa).

The signal sequence occupies residues 1–22 (MKKTLLAIILGGMAFATTNASA). Cysteines 38 and 79 form a disulfide.

This sequence belongs to the fimbrial protein family.

The protein resides in the fimbrium. In terms of biological role, fimbriae (also called pili), polar filaments radiating from the surface of the bacterium to a length of 0.5-1.5 micrometers and numbering 100-300 per cell, enable bacteria to colonize the epithelium of specific host organs. Its function is as follows. FanC is the main component of the K99 fimbriae. This is K99 fimbrial protein (fanC) from Escherichia coli.